The primary structure comprises 982 residues: Probable DNA-directed RNA polymerase (982 aa).

This sequence belongs to the RNA polymerase beta chain family.

The catalysed reaction is RNA(n) + a ribonucleoside 5'-triphosphate = RNA(n+1) + diphosphate. The presence of the two linear plasmids, termed pGKL1 and pGKL2, in strains of Kluyveromyces lactis confers the killer phenotype to the host cell, by promoting the secretion of a toxin able to inhibit the growth of sensitive strains. The sequence is that of Probable DNA-directed RNA polymerase from Kluyveromyces lactis (strain ATCC 8585 / CBS 2359 / DSM 70799 / NBRC 1267 / NRRL Y-1140 / WM37) (Yeast).